Here is a 460-residue protein sequence, read N- to C-terminus: 3-isopropylmalate dehydratase large subunit (460 aa).

3 residues coordinate [4Fe-4S] cluster: cysteine 338, cysteine 398, and cysteine 401.

It belongs to the aconitase/IPM isomerase family. LeuC type 1 subfamily. Heterodimer of LeuC and LeuD. It depends on [4Fe-4S] cluster as a cofactor.

It catalyses the reaction (2R,3S)-3-isopropylmalate = (2S)-2-isopropylmalate. Its pathway is amino-acid biosynthesis; L-leucine biosynthesis; L-leucine from 3-methyl-2-oxobutanoate: step 2/4. Catalyzes the isomerization between 2-isopropylmalate and 3-isopropylmalate, via the formation of 2-isopropylmaleate. The sequence is that of 3-isopropylmalate dehydratase large subunit from Streptococcus thermophilus (strain ATCC BAA-491 / LMD-9).